The sequence spans 445 residues: Solute carrier family 52, riboflavin transporter, member 2 (445 aa).

6 helical membrane-spanning segments follow: residues 14 to 34, 47 to 67, 86 to 106, 112 to 132, 147 to 167, and 196 to 216; these read LLVA…WVEL, LPSY…VVTL, VLGM…APVA, VAFL…NVTF, FFLG…VQGV, and FFWA…GLLL. Positions 228 to 264 are disordered; that stretch reads ELGSGLQVGAPGAEEEVEESSPLQEPPSQAAGTTPGP. Low complexity predominate over residues 247–258; that stretch reads SSPLQEPPSQAA. A run of 5 helical transmembrane segments spans residues 277–297, 312–332, 339–359, 366–386, and 404–424; these read ACLL…LPAV, LAVV…MGVL, LGGL…LAVL, VGTS…LGVF, and ALLA…VAMF.

The protein belongs to the riboflavin transporter family. Highly expressed in brain, fetal brain and salivary gland. Weakly expressed in other tissues.

The protein resides in the cell membrane. It catalyses the reaction riboflavin(in) = riboflavin(out). Its activity is regulated as follows. Riboflavin transport is Na(+)-independent but moderately pH-sensitive. Activity is strongly inhibited by riboflavin analogs, such as lumiflavin. Weakly inhibited by flavin adenine dinucleotide (FAD) and flavin mononucleotide (FMN). Plasma membrane transporter mediating the uptake by cells of the water soluble vitamin B2/riboflavin that plays a key role in biochemical oxidation-reduction reactions of the carbohydrate, lipid, and amino acid metabolism. Humans are unable to synthesize vitamin B2/riboflavin and must obtain it via intestinal absorption. May also act as a receptor for 4-hydroxybutyrate. Functionally, (Microbial infection) In case of infection by retroviruses, acts as a cell receptor to retroviral envelopes similar to the porcine endogenous retrovirus (PERV-A). This chain is Solute carrier family 52, riboflavin transporter, member 2 (SLC52A2), found in Homo sapiens (Human).